The following is a 116-amino-acid chain: Early 4 ORF3 protein (116 aa).

This sequence belongs to the adenoviridae E4 ORF3 family. Homodimer. Multimerizes through C-terminus tail by reciprocal or nonreciprocal interactions. Interacts with host PML isoform 2 C-terminal disordered region. Interacts with E1B-55k; this interaction is necessary for E1B 55 kDa protein to localize to the nuclear matrix fraction of the cell. May interact with host TRIM24, CREBBP, EP300, PRKDC and the MRN complex MRE11/RAD50/NBS1; these interactions may happen through nuclear bodies complexes.

It is found in the host nucleus. In terms of biological role, forms a multivalent network in host nucleus that inhibits nuclear bodies and prevents antiviral cellular activities. The network is made of multimerized dimers and surrounds adenovirus replication centers and nucleolus. Plays a role in splicing of the major late transcript. Prevents viral genome concatemer formation. In Human adenovirus C serotype 2 (HAdV-2), this protein is Early 4 ORF3 protein.